The sequence spans 385 residues: UPF0744 protein YSC83 (385 aa).

This sequence belongs to the UPF0744 family.

It localises to the mitochondrion outer membrane. The polypeptide is UPF0744 protein YSC83 (YSC83) (Saccharomyces cerevisiae (strain ATCC 204508 / S288c) (Baker's yeast)).